Reading from the N-terminus, the 419-residue chain is Glutamate dehydrogenase (419 aa).

K105 is a catalytic residue. Position 219–225 (G219–Y225) interacts with NAD(+).

The protein belongs to the Glu/Leu/Phe/Val dehydrogenases family. In terms of assembly, homohexamer.

The enzyme catalyses L-glutamate + NAD(+) + H2O = 2-oxoglutarate + NH4(+) + NADH + H(+). The catalysed reaction is L-glutamate + NADP(+) + H2O = 2-oxoglutarate + NH4(+) + NADPH + H(+). This chain is Glutamate dehydrogenase (gdhA), found in Thermococcus profundus.